The sequence spans 505 residues: 2,3-bisphosphoglycerate-independent phosphoglycerate mutase (505 aa).

Mn(2+)-binding residues include Asp13 and Ser63. Ser63 serves as the catalytic Phosphoserine intermediate. Substrate contacts are provided by residues His124, 153-154 (RD), Arg183, Arg189, 254-257 (RADR), and Lys329. Mn(2+)-binding residues include Asp395, His399, Asp436, His437, and His455.

This sequence belongs to the BPG-independent phosphoglycerate mutase family. Monomer. Requires Mn(2+) as cofactor.

The catalysed reaction is (2R)-2-phosphoglycerate = (2R)-3-phosphoglycerate. Its pathway is carbohydrate degradation; glycolysis; pyruvate from D-glyceraldehyde 3-phosphate: step 3/5. Functionally, catalyzes the interconversion of 2-phosphoglycerate and 3-phosphoglycerate. The sequence is that of 2,3-bisphosphoglycerate-independent phosphoglycerate mutase from Agrobacterium fabrum (strain C58 / ATCC 33970) (Agrobacterium tumefaciens (strain C58)).